Reading from the N-terminus, the 243-residue chain is UPF0246 protein SUB1767 (243 aa).

This sequence belongs to the UPF0246 family.

This chain is UPF0246 protein SUB1767, found in Streptococcus uberis (strain ATCC BAA-854 / 0140J).